Consider the following 540-residue polypeptide: Chaperonin GroEL 2 (540 aa).

Residues 29 to 32 (TLGP), 86 to 90 (DGTTT), G413, and D492 each bind ATP. Positions 521–540 (KPEKEKASVPGGGDMGGMDF) are disordered. Over residues 530 to 540 (PGGGDMGGMDF) the composition is skewed to gly residues.

Belongs to the chaperonin (HSP60) family. Forms a cylinder of 14 subunits composed of two heptameric rings stacked back-to-back. Interacts with the co-chaperonin GroES.

The protein localises to the secreted. Its subcellular location is the capsule. It is found in the cell surface. It localises to the cell wall. The enzyme catalyses ATP + H2O + a folded polypeptide = ADP + phosphate + an unfolded polypeptide.. Functionally, together with its co-chaperonin GroES, plays an essential role in assisting protein folding. The GroEL-GroES system forms a nano-cage that allows encapsulation of the non-native substrate proteins and provides a physical environment optimized to promote and accelerate protein folding. This Mycobacterium tuberculosis (strain ATCC 25177 / H37Ra) protein is Chaperonin GroEL 2.